A 279-amino-acid polypeptide reads, in one-letter code: Phosphatidylglycerol--prolipoprotein diacylglyceryl transferase (279 aa).

The next 3 membrane-spanning stretches (helical) occupy residues 22 to 42 (WYGI…QAAL), 52 to 72 (LIDI…IYFV), and 89 to 109 (IWHG…SGII). R137 contacts a 1,2-diacyl-sn-glycero-3-phospho-(1'-sn-glycerol). 2 consecutive transmembrane segments (helical) span residues 203–223 (LGET…FVEA) and 235–255 (IRVA…FVIY).

Belongs to the Lgt family.

The protein resides in the cell membrane. The enzyme catalyses L-cysteinyl-[prolipoprotein] + a 1,2-diacyl-sn-glycero-3-phospho-(1'-sn-glycerol) = an S-1,2-diacyl-sn-glyceryl-L-cysteinyl-[prolipoprotein] + sn-glycerol 1-phosphate + H(+). It participates in protein modification; lipoprotein biosynthesis (diacylglyceryl transfer). Catalyzes the transfer of the diacylglyceryl group from phosphatidylglycerol to the sulfhydryl group of the N-terminal cysteine of a prolipoprotein, the first step in the formation of mature lipoproteins. In Staphylococcus epidermidis (strain ATCC 12228 / FDA PCI 1200), this protein is Phosphatidylglycerol--prolipoprotein diacylglyceryl transferase.